Consider the following 224-residue polypeptide: MKRTSRSLTAALLGIAALLAGCIKPNTFDPYANPGRGELDRRQKIVNGRPDLETVQQQLANLDATIRAMIAKYSPQTRFSTGVTVSHLTNGCNDPFTRTIGRQEASELFFGRPAPTPQQWLQIVTELAPVFKAAGFRPNNSVPGDPPQPLGAPNYSQIRDDGVTINLVNGDNRGPLGYSYNTGCHPPAAWRTAPPPLNMRPANDPDVHYPYLYGSPGGRTRDAY.

A signal peptide spans 1–21 (MKRTSRSLTAALLGIAALLAG). Cys22 carries the N-palmitoyl cysteine lipid modification. The S-diacylglycerol cysteine moiety is linked to residue Cys22.

To M.bovis LprP.

The protein resides in the cell membrane. This is an uncharacterized protein from Mycobacterium tuberculosis (strain ATCC 25618 / H37Rv).